A 402-amino-acid chain; its full sequence is CCA-adding enzyme (402 aa).

ATP-binding residues include Gly-32 and Arg-35. Residues Gly-32 and Arg-35 each coordinate CTP. Positions 45 and 47 each coordinate Mg(2+). ATP-binding residues include Arg-116, Asp-159, Arg-162, Arg-165, and Arg-168. Residues Arg-116, Asp-159, Arg-162, Arg-165, and Arg-168 each contribute to the CTP site.

Belongs to the tRNA nucleotidyltransferase/poly(A) polymerase family. Bacterial CCA-adding enzyme type 3 subfamily. Homodimer. It depends on Mg(2+) as a cofactor.

It carries out the reaction a tRNA precursor + 2 CTP + ATP = a tRNA with a 3' CCA end + 3 diphosphate. It catalyses the reaction a tRNA with a 3' CCA end + 2 CTP + ATP = a tRNA with a 3' CCACCA end + 3 diphosphate. Functionally, catalyzes the addition and repair of the essential 3'-terminal CCA sequence in tRNAs without using a nucleic acid template. Adds these three nucleotides in the order of C, C, and A to the tRNA nucleotide-73, using CTP and ATP as substrates and producing inorganic pyrophosphate. tRNA 3'-terminal CCA addition is required both for tRNA processing and repair. Also involved in tRNA surveillance by mediating tandem CCA addition to generate a CCACCA at the 3' terminus of unstable tRNAs. While stable tRNAs receive only 3'-terminal CCA, unstable tRNAs are marked with CCACCA and rapidly degraded. This Streptococcus pyogenes serotype M4 (strain MGAS10750) protein is CCA-adding enzyme.